Reading from the N-terminus, the 709-residue chain is G1/S-specific cyclin-E (709 aa).

5 disordered regions span residues 1–30 (MGLNAKSVCSTSSTEPNGSIVTTAPSNGEV), 43–149 (ISSS…NLSS), 162–205 (VDGQ…GSKQ), 221–289 (TVVT…PKHQ), and 642–709 (ALRA…RSNP). 3 stretches are compositionally biased toward polar residues: residues 7–29 (SVCSTSSTEPNGSIVTTAPSNGE), 61–70 (PSTSFSSASQ), and 91–106 (CDSQNLAASTAATSNG). Phosphoserine is present on residues Ser114, Ser115, Ser117, and Ser129. Polar residues predominate over residues 162 to 175 (VDGQSTQELLSIRS). A phosphoserine mark is found at Ser187, Ser192, Ser195, and Ser198. Residues 187–199 (SPLPDSPDSPPSP) are compositionally biased toward pro residues. The segment covering 228 to 258 (EDDDLLDDSCEDYSYDEDDEDDVEEEDDDVE) has biased composition (acidic residues). Positions 260–277 (YSSTISPASSGCSQQQAV) are enriched in polar residues. Thr651 carries the phosphothreonine modification. Residues 677–709 (SSTTTCCNTAASNKGGKSSSNNSVTSCSSRSNP) show a composition bias toward low complexity.

It belongs to the cyclin family. Cyclin E subfamily. Interacts with a member of the CDK2/CDK protein kinases to form a serine/threonine kinase holoenzyme complex. The cyclin subunit imparts substrate specificity to the complex. Interacts (via C-terminus) with Z600 (via C-terminus). Isoform II is ubiquitous in early embryos and, prior to mitosis 14, is rapidly degraded in all cells except the pole (germ) cells. Expressed during G1 phase in proliferating peripheral nervous system cells. Constitutive expression in embryonic cycles lacking a G1 phase.

It is found in the nucleus. Its function is as follows. Essential for the control of the cell cycle at the G1/S (start) transition. Targeted by archipelago for degradation by the SFC ubiquitin ligase complex. This chain is G1/S-specific cyclin-E (CycE), found in Drosophila melanogaster (Fruit fly).